Reading from the N-terminus, the 318-residue chain is Death effector domain-containing protein (318 aa).

The region spanning 25–103 is the DED domain; it reads SLHRMFDIVG…RHDLLPYVTL (79 aa). Residues 128–191 are disordered; sequence PRALSDPEPR…SVTPDPKEKQ (64 aa).

In terms of assembly, interacts with CASP8, CASP10, KRT8, KRT18, CASP3 and FADD. Homodimerizes and heterodimerizes with DEDD2. Post-translationally, exists predominantly in a mono- or diubiquitinated form. Ubiquitously expressed.

The protein resides in the cytoplasm. The protein localises to the nucleus. Its subcellular location is the nucleolus. Its function is as follows. A scaffold protein that directs CASP3 to certain substrates and facilitates their ordered degradation during apoptosis. May also play a role in mediating CASP3 cleavage of KRT18. Regulates degradation of intermediate filaments during apoptosis. May play a role in the general transcription machinery in the nucleus and might be an important regulator of the activity of GTF3C3. Inhibits DNA transcription in vitro. The sequence is that of Death effector domain-containing protein (Dedd) from Mus musculus (Mouse).